We begin with the raw amino-acid sequence, 234 residues long: tRNA (guanine-N(1)-)-methyltransferase (234 aa).

Residues glycine 115 and 135–140 (VGDYIL) each bind S-adenosyl-L-methionine.

This sequence belongs to the RNA methyltransferase TrmD family. Homodimer.

It localises to the cytoplasm. The enzyme catalyses guanosine(37) in tRNA + S-adenosyl-L-methionine = N(1)-methylguanosine(37) in tRNA + S-adenosyl-L-homocysteine + H(+). Functionally, specifically methylates guanosine-37 in various tRNAs. This chain is tRNA (guanine-N(1)-)-methyltransferase, found in Rickettsia rickettsii (strain Iowa).